Consider the following 177-residue polypeptide: Large ribosomal subunit protein uL5 (177 aa).

Belongs to the universal ribosomal protein uL5 family. Part of the 50S ribosomal subunit; part of the 5S rRNA/L5/L18/L25 subcomplex. Contacts the 5S rRNA and the P site tRNA. Forms a bridge to the 30S subunit in the 70S ribosome.

Its function is as follows. This is one of the proteins that bind and probably mediate the attachment of the 5S RNA into the large ribosomal subunit, where it forms part of the central protuberance. In the 70S ribosome it contacts protein S13 of the 30S subunit (bridge B1b), connecting the 2 subunits; this bridge is implicated in subunit movement. Contacts the P site tRNA; the 5S rRNA and some of its associated proteins might help stabilize positioning of ribosome-bound tRNAs. The sequence is that of Large ribosomal subunit protein uL5 from Ehrlichia canis (strain Jake).